Here is a 209-residue protein sequence, read N- to C-terminus: Streptogramin A acetyltransferase (209 aa).

His82 is an active-site residue.

This sequence belongs to the transferase hexapeptide repeat family. In terms of assembly, homohexamer.

Functionally, inactivates the A compounds of streptogramin antibiotics by acetylation, thus providing resistance to these antibiotics. This chain is Streptogramin A acetyltransferase (vatD), found in Enterococcus faecium (Streptococcus faecium).